Reading from the N-terminus, the 302-residue chain is Elongation factor Ts (302 aa).

The tract at residues 80 to 83 is involved in Mg(2+) ion dislocation from EF-Tu; it reads TDFV.

Belongs to the EF-Ts family.

The protein resides in the cytoplasm. In terms of biological role, associates with the EF-Tu.GDP complex and induces the exchange of GDP to GTP. It remains bound to the aminoacyl-tRNA.EF-Tu.GTP complex up to the GTP hydrolysis stage on the ribosome. This is Elongation factor Ts from Methylibium petroleiphilum (strain ATCC BAA-1232 / LMG 22953 / PM1).